We begin with the raw amino-acid sequence, 445 residues long: N-succinylarginine dihydrolase (445 aa).

Substrate is bound by residues A19–S28, N110, and H137–R138. E174 is a catalytic residue. Residue R214 participates in substrate binding. Residue H250 is part of the active site. 2 residues coordinate substrate: D252 and N363. The Nucleophile role is filled by C369.

It belongs to the succinylarginine dihydrolase family. Homodimer.

The enzyme catalyses N(2)-succinyl-L-arginine + 2 H2O + 2 H(+) = N(2)-succinyl-L-ornithine + 2 NH4(+) + CO2. It participates in amino-acid degradation; L-arginine degradation via AST pathway; L-glutamate and succinate from L-arginine: step 2/5. In terms of biological role, catalyzes the hydrolysis of N(2)-succinylarginine into N(2)-succinylornithine, ammonia and CO(2). In Shewanella loihica (strain ATCC BAA-1088 / PV-4), this protein is N-succinylarginine dihydrolase.